We begin with the raw amino-acid sequence, 77 residues long: Large ribosomal subunit protein uL24 (77 aa).

Belongs to the universal ribosomal protein uL24 family. Part of the 50S ribosomal subunit.

Functionally, one of two assembly initiator proteins, it binds directly to the 5'-end of the 23S rRNA, where it nucleates assembly of the 50S subunit. One of the proteins that surrounds the polypeptide exit tunnel on the outside of the subunit. The sequence is that of Large ribosomal subunit protein uL24 from Campylobacter fetus subsp. fetus (strain 82-40).